Consider the following 471-residue polypeptide: Glutamate--tRNA ligase (471 aa).

The 'HIGH' region motif lies at 9-19 (PSPTGYLHVGG). Residues cysteine 98, cysteine 100, cysteine 125, and histidine 127 each contribute to the Zn(2+) site. The short motif at 237–241 (KLSKR) is the 'KMSKS' region element. Position 240 (lysine 240) interacts with ATP.

It belongs to the class-I aminoacyl-tRNA synthetase family. Glutamate--tRNA ligase type 1 subfamily. Monomer. Zn(2+) serves as cofactor.

It is found in the cytoplasm. It carries out the reaction tRNA(Glu) + L-glutamate + ATP = L-glutamyl-tRNA(Glu) + AMP + diphosphate. Functionally, catalyzes the attachment of glutamate to tRNA(Glu) in a two-step reaction: glutamate is first activated by ATP to form Glu-AMP and then transferred to the acceptor end of tRNA(Glu). The chain is Glutamate--tRNA ligase from Salmonella paratyphi A (strain ATCC 9150 / SARB42).